The chain runs to 499 residues: Pyruvate kinase (499 aa).

Residue Arg-50 coordinates substrate. The K(+) site is built by Asn-52, Ser-54, Asp-84, and Thr-85. 52–55 (NFSH) lines the ATP pocket. Arg-91 contributes to the ATP binding site. Glu-241 is a binding site for Mg(2+). Substrate is bound by residues Gly-264, Asp-265, and Thr-297. Asp-265 lines the Mg(2+) pocket.

It belongs to the pyruvate kinase family. Homotetramer. Requires Mg(2+) as cofactor. K(+) serves as cofactor.

It carries out the reaction pyruvate + ATP = phosphoenolpyruvate + ADP + H(+). The protein operates within carbohydrate degradation; glycolysis; pyruvate from D-glyceraldehyde 3-phosphate: step 5/5. With respect to regulation, activated by fructose 2,6-bisphosphate, activated by the effector in a non cooperative manner. This chain is Pyruvate kinase (PYK), found in Leishmania mexicana.